We begin with the raw amino-acid sequence, 234 residues long: MWSSIAAFPVLVPVALACLGYEGGVPTPTAHHSNSAVIEVAAGQVFDAGWAKYDRGSGACKGQSEGDWKDAVFYLHSGATLKNVIIGANQAEGVHCDGPCTLQFVWFEDVCEDAITIKNDKAGQETWIIGGGAYHASDKIVQHNGCGTVNIINFYAEDYGKVPRSCGNCDKQCKRNVYVEGTTARNGGEVVGINLNYGDTATLKNVCADSAHPCVFYDGCAGDCEPKKVGYCSG.

A signal peptide spans 1–17; the sequence is MWSSIAAFPVLVPVALA.

It belongs to the polysaccharide lyase 3 family. It depends on Ca(2+) as a cofactor.

The protein localises to the secreted. It carries out the reaction Eliminative cleavage of (1-&gt;4)-alpha-D-galacturonan to give oligosaccharides with 4-deoxy-alpha-D-galact-4-enuronosyl groups at their non-reducing ends.. Functionally, pectinolytic enzyme consist of four classes of enzymes: pectin lyase, polygalacturonase, pectin methylesterase and rhamnogalacturonase. Among pectinolytic enzymes, pectin lyase is the most important in depolymerization of pectin, since it cleaves internal glycosidic bonds of highly methylated pectins. Favors pectate, the anion, over pectin, the methyl ester. The polypeptide is Probable pectate lyase F (plyF) (Aspergillus fumigatus (strain ATCC MYA-4609 / CBS 101355 / FGSC A1100 / Af293) (Neosartorya fumigata)).